A 349-amino-acid polypeptide reads, in one-letter code: Core protein VP7 (349 aa).

N-linked (GlcNAc...) asparagine; by host glycosylation occurs at Asn-45.

This sequence belongs to the orbivirus VP7 family. As to quaternary structure, homotrimer.

It localises to the virion. In terms of biological role, major structural core protein; binds to structural protein VP3. Constitutes the surface of the AHSV core. The protein is Core protein VP7 (Segment-7) of African horse sickness virus 6 (AHSV-6).